Consider the following 176-residue polypeptide: Disulfide bond formation protein B (176 aa).

The Cytoplasmic portion of the chain corresponds to 1 to 11 (MLQLTTYRNLQ). The helical transmembrane segment at 12–28 (VFLVIMTAIGMSFALFF) threads the bilayer. Residues 29–46 (LQRYMGFSPCPLCIFQRI) lie on the Periplasmic side of the membrane. The cysteines at positions 38 and 41 are disulfide-linked. Residues 47 to 63 (GLMIMGGFALIAALFHP) form a helical membrane-spanning segment. The Cytoplasmic segment spans residues 64 to 70 (KSMVIRL). A helical membrane pass occupies residues 71-88 (LLWLGSLAGIGWAAIVAG). The Periplasmic segment spans residues 89-145 (RHVWLQHLPADQVPSCGPGLDYWLDTLPMQQVLKEVFAGSGECASIDWTFLGLSIPE). Cys104 and Cys131 are joined by a disulfide. The chain crosses the membrane as a helical span at residues 146-164 (QSLILFSILILTHLLILWR). The Cytoplasmic segment spans residues 165–176 (IVRPATPKPLAR).

The protein belongs to the DsbB family.

It localises to the cell inner membrane. Its function is as follows. Required for disulfide bond formation in some periplasmic proteins. Acts by oxidizing the DsbA protein. This is Disulfide bond formation protein B from Psychrobacter cryohalolentis (strain ATCC BAA-1226 / DSM 17306 / VKM B-2378 / K5).